The chain runs to 747 residues: Probable type III restriction-modification enzyme HindVI Mod subunit (747 aa).

A binding of S-adenosyl methionine region spans residues 267–270 (DPPY).

Belongs to the N(4)/N(6)-methyltransferase family. In terms of assembly, homodimer, also forms a functional restriction-competent complex with Res.

It catalyses the reaction a 2'-deoxyadenosine in DNA + S-adenosyl-L-methionine = an N(6)-methyl-2'-deoxyadenosine in DNA + S-adenosyl-L-homocysteine + H(+). Its function is as follows. A beta subtype methylase that binds the system-specific DNA recognition site 5'-CGAAT-3' and methylates A-4 (of only 1 strand). DNA restriction requires both the Res and Mod subunits. This Haemophilus influenzae (strain ATCC 51907 / DSM 11121 / KW20 / Rd) protein is Probable type III restriction-modification enzyme HindVI Mod subunit.